The primary structure comprises 110 residues: Nucleoid-associated protein ESA_02800 (110 aa).

The tract at residues 89-110 (QKEKMASVSSGMQLPPGFKMPF) is disordered.

Belongs to the YbaB/EbfC family. As to quaternary structure, homodimer.

Its subcellular location is the cytoplasm. The protein localises to the nucleoid. Functionally, binds to DNA and alters its conformation. May be involved in regulation of gene expression, nucleoid organization and DNA protection. The chain is Nucleoid-associated protein ESA_02800 from Cronobacter sakazakii (strain ATCC BAA-894) (Enterobacter sakazakii).